Here is a 310-residue protein sequence, read N- to C-terminus: HPr kinase/phosphorylase (310 aa).

Active-site residues include histidine 138 and lysine 159. 153–160 (GKSGVGKS) is a binding site for ATP. Serine 160 serves as a coordination point for Mg(2+). Catalysis depends on aspartate 177, which acts as the Proton acceptor; for phosphorylation activity. Proton donor; for dephosphorylation activity. An important for the catalytic mechanism of both phosphorylation and dephosphorylation region spans residues 201–210 (LEIRGLGIIN). Glutamate 202 contributes to the Mg(2+) binding site. Residue arginine 243 is part of the active site. The interval 264 to 269 (PVRPGR) is important for the catalytic mechanism of dephosphorylation.

It belongs to the HPrK/P family. In terms of assembly, homohexamer. Requires Mg(2+) as cofactor.

The enzyme catalyses [HPr protein]-L-serine + ATP = [HPr protein]-O-phospho-L-serine + ADP + H(+). It carries out the reaction [HPr protein]-O-phospho-L-serine + phosphate + H(+) = [HPr protein]-L-serine + diphosphate. Functionally, catalyzes the ATP- as well as the pyrophosphate-dependent phosphorylation of a specific serine residue in HPr, a phosphocarrier protein of the phosphoenolpyruvate-dependent sugar phosphotransferase system (PTS). HprK/P also catalyzes the pyrophosphate-producing, inorganic phosphate-dependent dephosphorylation (phosphorolysis) of seryl-phosphorylated HPr (P-Ser-HPr). The two antagonistic activities of HprK/P are regulated by several intracellular metabolites, which change their concentration in response to the absence or presence of rapidly metabolisable carbon sources (glucose, fructose, etc.) in the growth medium. Also phosphorylates/dephosphorylates the HPr-like catabolite repression protein crh on a specific serine residue. Therefore, by controlling the phosphorylation state of HPr and crh, HPrK/P is a sensor enzyme that plays a major role in the regulation of carbon metabolism and sugar transport: it mediates carbon catabolite repression (CCR), and regulates PTS-catalyzed carbohydrate uptake and inducer exclusion. The polypeptide is HPr kinase/phosphorylase (Bacillus velezensis (strain DSM 23117 / BGSC 10A6 / LMG 26770 / FZB42) (Bacillus amyloliquefaciens subsp. plantarum)).